Reading from the N-terminus, the 346-residue chain is Holliday junction branch migration complex subunit RuvB (346 aa).

The tract at residues 1-183 (MTEQRIIASS…FGIVQRLEFY (183 aa)) is large ATPase domain (RuvB-L). ATP contacts are provided by residues I22, R23, G64, K67, T68, T69, 130–132 (EDF), R173, Y183, and R220. Residue T68 coordinates Mg(2+). A small ATPAse domain (RuvB-S) region spans residues 184–254 (SPQELTRIVS…VAQAAMQMLK (71 aa)). Residues 257–346 (PEGFDELDRR…PGIGEPGDLF (90 aa)) form a head domain (RuvB-H) region. DNA-binding residues include R293, R312, and R317.

This sequence belongs to the RuvB family. Homohexamer. Forms an RuvA(8)-RuvB(12)-Holliday junction (HJ) complex. HJ DNA is sandwiched between 2 RuvA tetramers; dsDNA enters through RuvA and exits via RuvB. An RuvB hexamer assembles on each DNA strand where it exits the tetramer. Each RuvB hexamer is contacted by two RuvA subunits (via domain III) on 2 adjacent RuvB subunits; this complex drives branch migration. In the full resolvosome a probable DNA-RuvA(4)-RuvB(12)-RuvC(2) complex forms which resolves the HJ.

It is found in the cytoplasm. It carries out the reaction ATP + H2O = ADP + phosphate + H(+). The RuvA-RuvB-RuvC complex processes Holliday junction (HJ) DNA during genetic recombination and DNA repair, while the RuvA-RuvB complex plays an important role in the rescue of blocked DNA replication forks via replication fork reversal (RFR). RuvA specifically binds to HJ cruciform DNA, conferring on it an open structure. The RuvB hexamer acts as an ATP-dependent pump, pulling dsDNA into and through the RuvAB complex. RuvB forms 2 homohexamers on either side of HJ DNA bound by 1 or 2 RuvA tetramers; 4 subunits per hexamer contact DNA at a time. Coordinated motions by a converter formed by DNA-disengaged RuvB subunits stimulates ATP hydrolysis and nucleotide exchange. Immobilization of the converter enables RuvB to convert the ATP-contained energy into a lever motion, pulling 2 nucleotides of DNA out of the RuvA tetramer per ATP hydrolyzed, thus driving DNA branch migration. The RuvB motors rotate together with the DNA substrate, which together with the progressing nucleotide cycle form the mechanistic basis for DNA recombination by continuous HJ branch migration. Branch migration allows RuvC to scan DNA until it finds its consensus sequence, where it cleaves and resolves cruciform DNA. The chain is Holliday junction branch migration complex subunit RuvB from Xanthomonas euvesicatoria pv. vesicatoria (strain 85-10) (Xanthomonas campestris pv. vesicatoria).